The sequence spans 184 residues: Thymidine kinase (184 aa).

Residues 15–22 and 89–92 each bind ATP; these read GPMFSGKS and DEIQ. Glu-90 functions as the Proton acceptor in the catalytic mechanism. Zn(2+) contacts are provided by Cys-146, Cys-149, Cys-178, and Cys-181.

This sequence belongs to the thymidine kinase family. As to quaternary structure, homotetramer.

It localises to the cytoplasm. It carries out the reaction thymidine + ATP = dTMP + ADP + H(+). The sequence is that of Thymidine kinase from Mesomycoplasma hyopneumoniae (strain 232) (Mycoplasma hyopneumoniae).